Consider the following 97-residue polypeptide: Co-chaperonin GroES (97 aa).

It belongs to the GroES chaperonin family. As to quaternary structure, heptamer of 7 subunits arranged in a ring. Interacts with the chaperonin GroEL.

The protein localises to the cytoplasm. In terms of biological role, together with the chaperonin GroEL, plays an essential role in assisting protein folding. The GroEL-GroES system forms a nano-cage that allows encapsulation of the non-native substrate proteins and provides a physical environment optimized to promote and accelerate protein folding. GroES binds to the apical surface of the GroEL ring, thereby capping the opening of the GroEL channel. The polypeptide is Co-chaperonin GroES (Pseudomonas putida (strain GB-1)).